A 75-amino-acid polypeptide reads, in one-letter code: Putative antitoxin VapB12 (75 aa).

In terms of biological role, putative antitoxin component of a possible type II toxin-antitoxin (TA) system. The cognate toxin is VapC12. The polypeptide is Putative antitoxin VapB12 (vapB12) (Mycobacterium tuberculosis (strain CDC 1551 / Oshkosh)).